Consider the following 100-residue polypeptide: Protein MEN-8 (100 aa).

An N-terminal signal peptide occupies residues 1–33; the sequence is MANNMKSATFCKATWAIFLVALAILVQLKGSEA. Cystine bridges form between Cys38–Cys76, Cys48–Cys65, Cys66–Cys91, and Cys78–Cys98.

It belongs to the A9/FIL1 family.

It localises to the secreted. This is Protein MEN-8 (MEN-8) from Silene latifolia (White campion).